The sequence spans 249 residues: Eukaryotic translation initiation factor 3 subunit K (249 aa).

One can recognise a PCI domain in the interval 46–222 (FDCYANLALL…VKVPTNKENE (177 aa)).

It belongs to the eIF-3 subunit K family. Component of the eukaryotic translation initiation factor 3 (eIF-3) complex.

The protein localises to the cytoplasm. Its function is as follows. Component of the eukaryotic translation initiation factor 3 (eIF-3) complex, which is involved in protein synthesis of a specialized repertoire of mRNAs and, together with other initiation factors, stimulates binding of mRNA and methionyl-tRNAi to the 40S ribosome. The eIF-3 complex specifically targets and initiates translation of a subset of mRNAs involved in cell proliferation. The polypeptide is Eukaryotic translation initiation factor 3 subunit K (Neosartorya fischeri (strain ATCC 1020 / DSM 3700 / CBS 544.65 / FGSC A1164 / JCM 1740 / NRRL 181 / WB 181) (Aspergillus fischerianus)).